A 244-amino-acid chain; its full sequence is Probable phosphatase NT01CX_1282 (244 aa).

Residues H8, H10, H16, H41, E74, H102, H132, D193, and H195 each contribute to the Zn(2+) site.

This sequence belongs to the PHP family. Zn(2+) serves as cofactor.

The sequence is that of Probable phosphatase NT01CX_1282 from Clostridium novyi (strain NT).